A 485-amino-acid chain; its full sequence is UDP-N-acetylmuramoyl-L-alanyl-D-glutamate--2,6-diaminopimelate ligase (485 aa).

Ser-28 provides a ligand contact to UDP-N-acetyl-alpha-D-muramoyl-L-alanyl-D-glutamate. 108–114 (GTNGKTS) contributes to the ATP binding site. UDP-N-acetyl-alpha-D-muramoyl-L-alanyl-D-glutamate contacts are provided by residues Asn-147, 148 to 149 (TT), Ser-175, and Arg-183. Position 215 is an N6-carboxylysine (Lys-215). Meso-2,6-diaminopimelate contacts are provided by residues Arg-374, 398–401 (DNPR), Gly-449, and Glu-453. Positions 398 to 401 (DNPR) match the Meso-diaminopimelate recognition motif motif.

Belongs to the MurCDEF family. MurE subfamily. Mg(2+) is required as a cofactor. In terms of processing, carboxylation is probably crucial for Mg(2+) binding and, consequently, for the gamma-phosphate positioning of ATP.

The protein localises to the cytoplasm. The catalysed reaction is UDP-N-acetyl-alpha-D-muramoyl-L-alanyl-D-glutamate + meso-2,6-diaminopimelate + ATP = UDP-N-acetyl-alpha-D-muramoyl-L-alanyl-gamma-D-glutamyl-meso-2,6-diaminopimelate + ADP + phosphate + H(+). It participates in cell wall biogenesis; peptidoglycan biosynthesis. In terms of biological role, catalyzes the addition of meso-diaminopimelic acid to the nucleotide precursor UDP-N-acetylmuramoyl-L-alanyl-D-glutamate (UMAG) in the biosynthesis of bacterial cell-wall peptidoglycan. The chain is UDP-N-acetylmuramoyl-L-alanyl-D-glutamate--2,6-diaminopimelate ligase from Fusobacterium nucleatum subsp. nucleatum (strain ATCC 25586 / DSM 15643 / BCRC 10681 / CIP 101130 / JCM 8532 / KCTC 2640 / LMG 13131 / VPI 4355).